Consider the following 320-residue polypeptide: 4-hydroxythreonine-4-phosphate dehydrogenase (320 aa).

Residue T132 participates in substrate binding. A divalent metal cation-binding residues include H161, H205, and H258. K266, N275, and R284 together coordinate substrate.

Belongs to the PdxA family. In terms of assembly, homodimer. Requires a divalent metal cation as cofactor.

The protein resides in the cytoplasm. It carries out the reaction 4-(phosphooxy)-L-threonine + NAD(+) = 3-amino-2-oxopropyl phosphate + CO2 + NADH. It functions in the pathway cofactor biosynthesis; pyridoxine 5'-phosphate biosynthesis; pyridoxine 5'-phosphate from D-erythrose 4-phosphate: step 4/5. In terms of biological role, catalyzes the NAD(P)-dependent oxidation of 4-(phosphooxy)-L-threonine (HTP) into 2-amino-3-oxo-4-(phosphooxy)butyric acid which spontaneously decarboxylates to form 3-amino-2-oxopropyl phosphate (AHAP). The chain is 4-hydroxythreonine-4-phosphate dehydrogenase from Aquifex aeolicus (strain VF5).